Reading from the N-terminus, the 334-residue chain is Ketol-acid reductoisomerase (NADP(+)) (334 aa).

A KARI N-terminal Rossmann domain is found at 1–181 (MTTVYYDQSV…GATRAGVLET (181 aa)). NADP(+) contacts are provided by residues 25–28 (YGSQ), Arg48, Ser52, and 82–85 (DEIQ). The active site involves His107. Gly133 provides a ligand contact to NADP(+). Residues 182–327 (SFKEETETDL…RELRDMMPFI (146 aa)) enclose the KARI C-terminal knotted domain. 4 residues coordinate Mg(2+): Asp190, Glu194, Glu226, and Glu230. Ser251 serves as a coordination point for substrate.

It belongs to the ketol-acid reductoisomerase family. Mg(2+) is required as a cofactor.

It catalyses the reaction (2R)-2,3-dihydroxy-3-methylbutanoate + NADP(+) = (2S)-2-acetolactate + NADPH + H(+). The catalysed reaction is (2R,3R)-2,3-dihydroxy-3-methylpentanoate + NADP(+) = (S)-2-ethyl-2-hydroxy-3-oxobutanoate + NADPH + H(+). Its pathway is amino-acid biosynthesis; L-isoleucine biosynthesis; L-isoleucine from 2-oxobutanoate: step 2/4. It participates in amino-acid biosynthesis; L-valine biosynthesis; L-valine from pyruvate: step 2/4. Functionally, involved in the biosynthesis of branched-chain amino acids (BCAA). Catalyzes an alkyl-migration followed by a ketol-acid reduction of (S)-2-acetolactate (S2AL) to yield (R)-2,3-dihydroxy-isovalerate. In the isomerase reaction, S2AL is rearranged via a Mg-dependent methyl migration to produce 3-hydroxy-3-methyl-2-ketobutyrate (HMKB). In the reductase reaction, this 2-ketoacid undergoes a metal-dependent reduction by NADPH to yield (R)-2,3-dihydroxy-isovalerate. In Staphylococcus saprophyticus subsp. saprophyticus (strain ATCC 15305 / DSM 20229 / NCIMB 8711 / NCTC 7292 / S-41), this protein is Ketol-acid reductoisomerase (NADP(+)).